The chain runs to 173 residues: Photosystem I assembly protein Ycf3 (173 aa).

TPR repeat units lie at residues alanine 35–proline 68, serine 72–methionine 105, and glycine 120–asparagine 153.

The protein belongs to the Ycf3 family.

Its subcellular location is the cellular thylakoid membrane. Functionally, essential for the assembly of the photosystem I (PSI) complex. May act as a chaperone-like factor to guide the assembly of the PSI subunits. This chain is Photosystem I assembly protein Ycf3, found in Trichodesmium erythraeum (strain IMS101).